Consider the following 679-residue polypeptide: Methionine--tRNA ligase (679 aa).

Positions 15–25 match the 'HIGH' region motif; it reads PYANGSIHLGH. C146, C149, C159, and C162 together coordinate Zn(2+). Residues 332–336 carry the 'KMSKS' region motif; the sequence is KMSKS. K335 provides a ligand contact to ATP. A tRNA-binding domain is found at 577–679; the sequence is DFAKVDMRVA…AGALPGMPVK (103 aa).

It belongs to the class-I aminoacyl-tRNA synthetase family. MetG type 1 subfamily. As to quaternary structure, homodimer. Requires Zn(2+) as cofactor.

It localises to the cytoplasm. The enzyme catalyses tRNA(Met) + L-methionine + ATP = L-methionyl-tRNA(Met) + AMP + diphosphate. Functionally, is required not only for elongation of protein synthesis but also for the initiation of all mRNA translation through initiator tRNA(fMet) aminoacylation. The sequence is that of Methionine--tRNA ligase from Sodalis glossinidius (strain morsitans).